The primary structure comprises 247 residues: UPF0246 protein LAF_1150 (247 aa).

Belongs to the UPF0246 family.

This chain is UPF0246 protein LAF_1150, found in Limosilactobacillus fermentum (strain NBRC 3956 / LMG 18251) (Lactobacillus fermentum).